The primary structure comprises 485 residues: GTPase Obg (485 aa).

The 158-residue stretch at 2–159 (SKFIDRVVLH…RDLVLELKSV (158 aa)) folds into the Obg domain. A disordered region spans residues 64-84 (PHAKAGNGKPGEGGNRDGKMG). The 181-residue stretch at 160 to 340 (ADVGLVGFPS…LTFALADLVR (181 aa)) folds into the OBG-type G domain. GTP-binding positions include 166-173 (GFPSAGKS), 191-195 (FTTLV), 212-215 (DVPG), 292-295 (NKTD), and 321-323 (SAV). Residues Ser173 and Thr193 each contribute to the Mg(2+) site. The OCT domain occupies 358–438 (PIAVDESGFT…IGDVTFDWEP (81 aa)). Basic and acidic residues predominate over residues 457–469 (LEQSDRVSAAERK). The disordered stretch occupies residues 457 to 485 (LEQSDRVSAAERKHASRVRRGLVEDDEQR).

The protein belongs to the TRAFAC class OBG-HflX-like GTPase superfamily. OBG GTPase family. As to quaternary structure, monomer. The cofactor is Mg(2+).

It localises to the cytoplasm. In terms of biological role, an essential GTPase which binds GTP, GDP and possibly (p)ppGpp with moderate affinity, with high nucleotide exchange rates and a fairly low GTP hydrolysis rate. Plays a role in control of the cell cycle, stress response, ribosome biogenesis and in those bacteria that undergo differentiation, in morphogenesis control. The sequence is that of GTPase Obg from Nocardia farcinica (strain IFM 10152).